The following is a 533-amino-acid chain: CTP synthase (533 aa).

The amidoligase domain stretch occupies residues 1–270 (MVHLAKYIVV…GDYIVRRIEL (270 aa)). S16 provides a ligand contact to CTP. Position 16 (S16) interacts with UTP. 17 to 22 (SIGKGI) is a binding site for ATP. Residue Y57 coordinates L-glutamine. ATP is bound at residue D74. Positions 74 and 144 each coordinate Mg(2+). CTP is bound by residues 151–153 (DIE), 191–196 (KTKPTQ), and K227. UTP contacts are provided by residues 191–196 (KTKPTQ) and K227. The 231-residue stretch at 303–533 (YVELEDSYIS…FLRAALERSR (231 aa)) folds into the Glutamine amidotransferase type-1 domain. G355 contributes to the L-glutamine binding site. The active-site Nucleophile; for glutamine hydrolysis is the C382. L-glutamine is bound by residues 383 to 386 (LGMQ), E405, and R462. Active-site residues include H507 and E509.

It belongs to the CTP synthase family. Homotetramer.

The catalysed reaction is UTP + L-glutamine + ATP + H2O = CTP + L-glutamate + ADP + phosphate + 2 H(+). It carries out the reaction L-glutamine + H2O = L-glutamate + NH4(+). It catalyses the reaction UTP + NH4(+) + ATP = CTP + ADP + phosphate + 2 H(+). It functions in the pathway pyrimidine metabolism; CTP biosynthesis via de novo pathway; CTP from UDP: step 2/2. Allosterically activated by GTP, when glutamine is the substrate; GTP has no effect on the reaction when ammonia is the substrate. The allosteric effector GTP functions by stabilizing the protein conformation that binds the tetrahedral intermediate(s) formed during glutamine hydrolysis. Inhibited by the product CTP, via allosteric rather than competitive inhibition. Catalyzes the ATP-dependent amination of UTP to CTP with either L-glutamine or ammonia as the source of nitrogen. Regulates intracellular CTP levels through interactions with the four ribonucleotide triphosphates. The chain is CTP synthase from Methanothermobacter thermautotrophicus (strain ATCC 29096 / DSM 1053 / JCM 10044 / NBRC 100330 / Delta H) (Methanobacterium thermoautotrophicum).